The chain runs to 194 residues: Cytochrome c oxidase assembly protein CtaG (194 aa).

The Cytoplasmic portion of the chain corresponds to 1–12 (MALRGPAKTVAQ). The chain crosses the membrane as a helical; Signal-anchor for type II membrane protein span at residues 13–35 (TVSVVIFMGALAWASVPLYDWFC). Over 36–194 (RVTGFGGVTG…IEENSDTSLN (159 aa)) the chain is Periplasmic.

This sequence belongs to the COX11/CtaG family.

It is found in the cell inner membrane. In terms of biological role, exerts its effect at some terminal stage of cytochrome c oxidase synthesis, probably by being involved in the insertion of the copper B into subunit I. The chain is Cytochrome c oxidase assembly protein CtaG from Roseobacter denitrificans (strain ATCC 33942 / OCh 114) (Erythrobacter sp. (strain OCh 114)).